The sequence spans 142 residues: Large ribosomal subunit protein uL13 (142 aa).

It belongs to the universal ribosomal protein uL13 family. Part of the 50S ribosomal subunit.

Functionally, this protein is one of the early assembly proteins of the 50S ribosomal subunit, although it is not seen to bind rRNA by itself. It is important during the early stages of 50S assembly. The polypeptide is Large ribosomal subunit protein uL13 (Bordetella bronchiseptica (strain ATCC BAA-588 / NCTC 13252 / RB50) (Alcaligenes bronchisepticus)).